Reading from the N-terminus, the 249-residue chain is Leucyl/phenylalanyl-tRNA--protein transferase (249 aa).

Belongs to the L/F-transferase family.

The protein localises to the cytoplasm. The enzyme catalyses N-terminal L-lysyl-[protein] + L-leucyl-tRNA(Leu) = N-terminal L-leucyl-L-lysyl-[protein] + tRNA(Leu) + H(+). It catalyses the reaction N-terminal L-arginyl-[protein] + L-leucyl-tRNA(Leu) = N-terminal L-leucyl-L-arginyl-[protein] + tRNA(Leu) + H(+). The catalysed reaction is L-phenylalanyl-tRNA(Phe) + an N-terminal L-alpha-aminoacyl-[protein] = an N-terminal L-phenylalanyl-L-alpha-aminoacyl-[protein] + tRNA(Phe). In terms of biological role, functions in the N-end rule pathway of protein degradation where it conjugates Leu, Phe and, less efficiently, Met from aminoacyl-tRNAs to the N-termini of proteins containing an N-terminal arginine or lysine. The sequence is that of Leucyl/phenylalanyl-tRNA--protein transferase from Cupriavidus metallidurans (strain ATCC 43123 / DSM 2839 / NBRC 102507 / CH34) (Ralstonia metallidurans).